Reading from the N-terminus, the 952-residue chain is Valine--tRNA ligase (952 aa).

The short motif at 45-55 is the 'HIGH' region element; the sequence is PNVTGSLHMGH. A 'KMSKS' region motif is present at residues 571–575; that stretch reads KMSKS. Lysine 574 contributes to the ATP binding site. Positions 894 to 950 form a coiled coil; sequence KEIAKADADIARVDLKLADQNFIANAPGEIVEDEKEKREAAAARKAKFVEALERLKA.

This sequence belongs to the class-I aminoacyl-tRNA synthetase family. ValS type 1 subfamily. Monomer.

It is found in the cytoplasm. The catalysed reaction is tRNA(Val) + L-valine + ATP = L-valyl-tRNA(Val) + AMP + diphosphate. In terms of biological role, catalyzes the attachment of valine to tRNA(Val). As ValRS can inadvertently accommodate and process structurally similar amino acids such as threonine, to avoid such errors, it has a 'posttransfer' editing activity that hydrolyzes mischarged Thr-tRNA(Val) in a tRNA-dependent manner. In Nitrobacter winogradskyi (strain ATCC 25391 / DSM 10237 / CIP 104748 / NCIMB 11846 / Nb-255), this protein is Valine--tRNA ligase.